A 372-amino-acid chain; its full sequence is E3 ubiquitin-protein ligase RNF34 (372 aa).

The segment at 56-107 (EGPNIVCKACGLSFSVFRKKHVCCDCKKDFCSVCSVLQENLRRCSTCHLLQE) adopts an FYVE-type zinc-finger fold. Positions 115 to 134 (LMRLKVKDLRQYLILRNIPI) constitute an SAP 1 domain. Phosphoserine is present on Ser169. A disordered region spans residues 194–253 (QGELMDGDQTSRSGVPAQVQSEITSANTEDDDDDDDEDDDDEEENAEDRNPGLSKERVRA). Residues 201-220 (DQTSRSGVPAQVQSEITSAN) are compositionally biased toward polar residues. Positions 221 to 239 (TEDDDDDDDEDDDDEEENA) are enriched in acidic residues. Residues 240–252 (EDRNPGLSKERVR) show a composition bias toward basic and acidic residues. Phosphoserine is present on residues Ser254 and Ser256. The 15-residue stretch at 264–278 (VEGMSVRQLKEILAR) folds into the SAP 2 domain. The RING-type zinc finger occupies 325-360 (CRICMDAVIDCVLLECGHMVTCTKCGKRMSECPICR).

Interacts with CASP8 and CASP10. Interacts (via RING-type zinc finger) with PPARGC1A. Interacts with NOD1. Interacts with p53/TP53; involved in p53/TP53 ubiquitination. Interacts (via RING-type zinc finger) with MDM2; the interaction stabilizes MDM2. Post-translationally, autoubiquitinated (in vitro). Proteolytically cleaved by caspases upon induction of apoptosis by TNF. Ubiquitous. Detected in heart, brain, liver, skeletal muscle, kidney, pancreas, spleen, thymus, prostate, testis, ovary, colon and leukocytes.

Its subcellular location is the cell membrane. The protein resides in the endomembrane system. It is found in the nucleus. It localises to the nucleus speckle. The protein localises to the cytoplasm. Its subcellular location is the cytosol. It carries out the reaction S-ubiquitinyl-[E2 ubiquitin-conjugating enzyme]-L-cysteine + [acceptor protein]-L-lysine = [E2 ubiquitin-conjugating enzyme]-L-cysteine + N(6)-ubiquitinyl-[acceptor protein]-L-lysine.. The protein operates within protein modification; protein ubiquitination. E3 ubiquitin-protein ligase that regulates several biological processes through the ubiquitin-mediated proteasomal degradation of various target proteins. Ubiquitinates the caspases CASP8 and CASP10, promoting their proteasomal degradation, to negatively regulate cell death downstream of death domain receptors in the extrinsic pathway of apoptosis. May mediate 'Lys-48'-linked polyubiquitination of RIPK1 and its subsequent proteasomal degradation thereby indirectly regulating the tumor necrosis factor-mediated signaling pathway. Negatively regulates p53/TP53 through its direct ubiquitination and targeting to proteasomal degradation. Indirectly, may also negatively regulate p53/TP53 through ubiquitination and degradation of SFN. Mediates PPARGC1A proteasomal degradation probably through ubiquitination thereby indirectly regulating the metabolism of brown fat cells. Possibly involved in innate immunity, through 'Lys-48'-linked polyubiquitination of NOD1 and its subsequent proteasomal degradation. This chain is E3 ubiquitin-protein ligase RNF34, found in Homo sapiens (Human).